The chain runs to 31 residues: Nemertide alpha-5 (31 aa).

3 disulfides stabilise this stretch: C2–C16, C9–C20, and C15–C26. 4-hydroxyproline occurs at positions 28 and 29.

It belongs to the nemertide family. As to expression, confined to the epidermis and to the mucus layer.

The protein localises to the secreted. Its function is as follows. Highly potent toxin against both insect and some mammalian sodium channels (Nav). It potently inhibits inactivation of insect sodium channels of B.germanica (BgNav1) (EC(50)=7.8 nM) and also delays the inactivation of mammalian Nav with potent activity on Nav1.3/SCN3A and Nav1.4/SCN4A (hNav1.1/SCN1A; EC(50)=102.1 nM, rNav1.2/SCN2A; EC(50)=156.1 nM, rNav1.3/SCN3A; EC(50)=9.4 nM, rNav1.4/SCN4A; EC(50)=15.4 nM, hNav1.5/SCN5A; EC(50)=132.7 nM, mNav1.6/SCN8A; EC(50)=66.9 nM, hNav1.9/SCN9A; EC(50)=73 nM). 1 uM is enough to completely inhibits the inactivation, resulting in sustained non-inactivating currents. In addition, the toxin significantly enhances the recovery from inactivation, and the open state is not required for the toxin to interact with the channel. In vivo, injection into brine shrimp (Artemia salina) stops movement or causes death after 24 hours (EC(50)=0.4 uM). This Ramphogordius pseudolacteus (Ribbon worm) protein is Nemertide alpha-5.